Reading from the N-terminus, the 902-residue chain is Proline-rich transmembrane protein 4 (902 aa).

The first 18 residues, 1–18 (MAGRGCLELGLFCWVLLA), serve as a signal peptide directing secretion. Disordered regions lie at residues 120–149 (FTPWASSLPPESTSPLSGPTKRPTAPSQPR) and 262–337 (PPPL…SGQP). Residues 125–139 (SSLPPESTSPLSGPT) show a composition bias toward low complexity. Residues 271-301 (SSPSPLDSVASPSSASIKTTPVQHDPTVSTS) show a composition bias toward polar residues. 5 helical membrane-spanning segments follow: residues 371–391 (AGALFGLVALLALLSLALLPW), 393–413 (CPPGAPCLALLDLLLLSAGTT), 431–451 (ALAWLLLQDLPLPCLAAGLGL), 465–485 (PIGLAALLLLGLGLAAAAALG), and 501–521 (GLHAFLAAFLSGLLLALSCWG). A Phosphoserine modification is found at serine 642. 3 disordered regions span residues 700–721 (GARANTTQSPASSPSSDCTVDF), 771–811 (KTGA…SLCG), and 836–872 (VLSPPRPSESSPSLPASGSYQALSPPSRDSPEHASEL). The segment covering 703–717 (ANTTQSPASSPSSDC) has biased composition (polar residues). A compositionally biased stretch (pro residues) spans 786–798 (SPAPPELPSPGAW). 2 stretches are compositionally biased toward low complexity: residues 799 to 811 (PPGSSASSGSLCG) and 843 to 854 (SESSPSLPASGS).

The protein resides in the membrane. The chain is Proline-rich transmembrane protein 4 (Prrt4) from Rattus norvegicus (Rat).